Here is a 408-residue protein sequence, read N- to C-terminus: ATP phosphoribosyltransferase regulatory subunit (408 aa).

It belongs to the class-II aminoacyl-tRNA synthetase family. HisZ subfamily. In terms of assembly, heteromultimer composed of HisG and HisZ subunits.

It localises to the cytoplasm. It participates in amino-acid biosynthesis; L-histidine biosynthesis; L-histidine from 5-phospho-alpha-D-ribose 1-diphosphate: step 1/9. Its function is as follows. Required for the first step of histidine biosynthesis. May allow the feedback regulation of ATP phosphoribosyltransferase activity by histidine. In Gloeothece citriformis (strain PCC 7424) (Cyanothece sp. (strain PCC 7424)), this protein is ATP phosphoribosyltransferase regulatory subunit.